The primary structure comprises 123 residues: S-adenosylmethionine decarboxylase proenzyme 2 (123 aa).

Serine 65 functions as the Schiff-base intermediate with substrate; via pyruvic acid in the catalytic mechanism. Serine 65 bears the Pyruvic acid (Ser); by autocatalysis mark. The active-site Proton acceptor; for processing activity is histidine 70. Cysteine 85 (proton donor; for catalytic activity) is an active-site residue.

It belongs to the prokaryotic AdoMetDC family. Type 1 subfamily. As to quaternary structure, heterotetramer of two alpha and two beta chains arranged as a dimer of alpha/beta heterodimers. Requires pyruvate as cofactor. Post-translationally, is synthesized initially as an inactive proenzyme. Formation of the active enzyme involves a self-maturation process in which the active site pyruvoyl group is generated from an internal serine residue via an autocatalytic post-translational modification. Two non-identical subunits are generated from the proenzyme in this reaction, and the pyruvate is formed at the N-terminus of the alpha chain, which is derived from the carboxyl end of the proenzyme. The post-translation cleavage follows an unusual pathway, termed non-hydrolytic serinolysis, in which the side chain hydroxyl group of the serine supplies its oxygen atom to form the C-terminus of the beta chain, while the remainder of the serine residue undergoes an oxidative deamination to produce ammonia and the pyruvoyl group blocking the N-terminus of the alpha chain.

The catalysed reaction is S-adenosyl-L-methionine + H(+) = S-adenosyl 3-(methylsulfanyl)propylamine + CO2. Its pathway is amine and polyamine biosynthesis; S-adenosylmethioninamine biosynthesis; S-adenosylmethioninamine from S-adenosyl-L-methionine: step 1/1. Its function is as follows. Catalyzes the decarboxylation of S-adenosylmethionine to S-adenosylmethioninamine (dcAdoMet), the propylamine donor required for the synthesis of the polyamines spermine and spermidine from the diamine putrescine. This chain is S-adenosylmethionine decarboxylase proenzyme 2, found in Bacillus anthracis.